A 396-amino-acid chain; its full sequence is NAD(P)H oxidoreductase RTN4IP1, mitochondrial (396 aa).

A mitochondrion-targeting transit peptide spans M1–S40. An Enoyl reductase (ER) domain is found at G52–V393. NADPH-binding residues include S214, G216, V217, S237, Y255, N276, L300, A341, F343, H386, A387, and R388.

Belongs to the zinc-containing alcohol dehydrogenase family. Quinone oxidoreductase subfamily. As to quaternary structure, interacts with RTN4, UQCRC1 and UQCRC2. In terms of tissue distribution, widely expressed in mitochondria-enriched tissues. Found in heart, kidney, liver, brain and spinal cord.

It localises to the mitochondrion matrix. The protein resides in the mitochondrion outer membrane. It carries out the reaction a 3-demethylubiquinone + NADH + 2 H(+) = a 3-demethylubiquinol + NAD(+). The enzyme catalyses a 3-demethylubiquinone + NADPH + 2 H(+) = a 3-demethylubiquinol + NADP(+). The catalysed reaction is 3-demethylubiquinone-10 + NADH + 2 H(+) = 3-demethylubiquinol-10 + NAD(+). It catalyses the reaction 3-demethylubiquinone-10 + NADPH + 2 H(+) = 3-demethylubiquinol-10 + NADP(+). It functions in the pathway cofactor biosynthesis; ubiquinone biosynthesis. NAD(P)H oxidoreductase involved in the ubiquinone biosynthetic pathway. Required for the O-methyltransferase activity of COQ3. Able to catalyze the oxidoreduction of 3-demethylubiquinone into 3-demethylubiquinol in vitro. However, it is unclear if 3-demethylubiquinone constitutes a substrate in vivo. May also play a role in the regulation of retinal ganglion cell (RGC) neurite outgrowth, and hence in the development of the inner retina and optic nerve. Appears to be a potent inhibitor of regeneration following spinal cord injury. The polypeptide is NAD(P)H oxidoreductase RTN4IP1, mitochondrial (Mus musculus (Mouse)).